Consider the following 312-residue polypeptide: Small ribosomal subunit biogenesis GTPase RsgA (312 aa).

The 160-residue stretch at 86–245 (QSFLKRPAVA…LADTPGFNRP (160 aa)) folds into the CP-type G domain. GTP-binding positions include 135–138 (TKID) and 187–195 (GPSGVGKTS). Zn(2+) contacts are provided by Cys270, Cys275, His277, and Cys283.

It belongs to the TRAFAC class YlqF/YawG GTPase family. RsgA subfamily. As to quaternary structure, monomer. Associates with 30S ribosomal subunit, binds 16S rRNA. The cofactor is Zn(2+).

The protein resides in the cytoplasm. In terms of biological role, one of several proteins that assist in the late maturation steps of the functional core of the 30S ribosomal subunit. Helps release RbfA from mature subunits. May play a role in the assembly of ribosomal proteins into the subunit. Circularly permuted GTPase that catalyzes slow GTP hydrolysis, GTPase activity is stimulated by the 30S ribosomal subunit. The polypeptide is Small ribosomal subunit biogenesis GTPase RsgA (Prochlorococcus marinus (strain NATL2A)).